The following is a 221-amino-acid chain: Ras-related protein Rab-28 (221 aa).

N-acetylserine is present on Ser2. Ser8 bears the Phosphoserine mark. Gly21, Gly24, Lys25, Thr26, Ser27, Gly38, Lys39, Tyr41, and Thr44 together coordinate GTP. Thr26 contributes to the Mg(2+) binding site. The segment at 35-49 (ETFGKQYKQTIGLDF) is switch I. Thr44 and Asp68 together coordinate Mg(2+). The segment at 68 to 85 (DIGGQTIGGKMLDKYIYG) is switch II. GTP contacts are provided by Gly71, Asn129, Lys130, Asp132, Ala160, and Lys161. Cys218 is subject to Cysteine methyl ester. Cys218 is lipidated: S-farnesyl cysteine. Positions 219–221 (AVQ) are cleaved as a propeptide — removed in mature form.

Belongs to the small GTPase superfamily. Rab family. Interacts (prenylated form) with PDE6D; the interaction promotes RAB28 delivery to the photoreceptor outer segments. Interacts with KCNJ13; the interaction may facilitate cone outer segments phagocytosis. Interacts with RELA; the interaction contributes to RELA transport from cytoplasm to nucleus. Mg(2+) is required as a cofactor. In terms of processing, isoprenylated.

The protein resides in the cell membrane. It is found in the cytoplasm. The protein localises to the cytoskeleton. Its subcellular location is the cilium basal body. It localises to the nucleus. The enzyme catalyses GTP + H2O = GDP + phosphate + H(+). Regulated by guanine nucleotide exchange factors (GEFs) which promote the exchange of bound GDP for free GTP. Regulated by GTPase activating proteins (GAPs) which increase the GTP hydrolysis activity. Inhibited by GDP dissociation inhibitors (GDIs). The small GTPases Rab are key regulators of intracellular membrane trafficking, from the formation of transport vesicles to their fusion with membranes. Rabs cycle between an inactive GDP-bound form and an active GTP-bound form that is able to recruit to membranes different sets of downstream effectors directly responsible for vesicle formation, movement, tethering and fusion. RAB28 is required for shedding and phagocytosis of cone cell outer segments (OS) discs in the retina. Also participates in nuclear factor kappa-B p65/RELA nuclear transport in endothelial cells. This is Ras-related protein Rab-28 (RAB28) from Bos taurus (Bovine).